We begin with the raw amino-acid sequence, 411 residues long: Snake venom metalloproteinase VMP1 (411 aa).

An N-terminal signal peptide occupies residues 1–20 (MIQVLLVTICLAAFPYQGSS). Positions 21–189 (IILESGNVND…KKAFQLNLTP (169 aa)) are excised as a propeptide. Residues 197–393 (RYVELVIIAD…KNPQCILNKP (197 aa)) form the Peptidase M12B domain. Ca(2+)-binding residues include Glu-200 and Asp-284. 3 disulfides stabilise this stretch: Cys-308–Cys-388, Cys-348–Cys-372, and Cys-350–Cys-355. Asn-311 carries N-linked (GlcNAc...) asparagine glycosylation. His-333 contacts Zn(2+). Residue Glu-334 is part of the active site. Zn(2+)-binding residues include His-337 and His-343. Cys-388, Asn-391, Val-403, Asn-406, Leu-408, and Glu-410 together coordinate Ca(2+).

It belongs to the venom metalloproteinase (M12B) family. P-I subfamily. In terms of assembly, monomer. Zn(2+) serves as cofactor. As to expression, expressed by the venom gland.

It localises to the secreted. With respect to regulation, inhibited by EDTA and 1,10-phenanthroline, but not by PMSF. This venom zinc protease has fibrinolytic activity. The recombinant enzyme cleaves both alpha- (FGA) and beta-chains (FGB) of fibrinogen, but not the gamma-chain. The recombinant protein does not produce hemorrhage in mice and does not have effect on ADP- or collagen-stimulated platelet aggregation. The sequence is that of Snake venom metalloproteinase VMP1 from Agkistrodon piscivorus leucostoma (Western cottonmouth).